We begin with the raw amino-acid sequence, 369 residues long: Ribonuclease 3 (369 aa).

An RNase III domain is found at 6 to 142 (IGFVQSSINY…IIGAVAADCD (137 aa)). A Mg(2+)-binding site is contributed by E46. Residue D50 is part of the active site. Positions 128 and 131 each coordinate Mg(2+). Residue E131 is part of the active site. The region spanning 272-341 (NPASTLHELF…SLKLLKFIAK (70 aa)) is the DRBM domain.

This sequence belongs to the ribonuclease III family. In terms of assembly, homodimer. Mg(2+) serves as cofactor.

It is found in the cytoplasm. The enzyme catalyses Endonucleolytic cleavage to 5'-phosphomonoester.. Functionally, digests double-stranded RNA. Involved in the processing of primary rRNA transcript to yield the immediate precursors to the large and small rRNAs (23S and 16S). Processes some mRNAs, and tRNAs when they are encoded in the rRNA operon. Processes pre-crRNA and tracrRNA of type II CRISPR loci if present in the organism. The protein is Ribonuclease 3 (rnc) of Treponema succinifaciens (strain ATCC 33096 / DSM 2489 / 6091).